We begin with the raw amino-acid sequence, 141 residues long: Large ribosomal subunit protein uL11 (141 aa).

This sequence belongs to the universal ribosomal protein uL11 family. As to quaternary structure, part of the ribosomal stalk of the 50S ribosomal subunit. Interacts with L10 and the large rRNA to form the base of the stalk. L10 forms an elongated spine to which L12 dimers bind in a sequential fashion forming a multimeric L10(L12)X complex. In terms of processing, one or more lysine residues are methylated.

Its function is as follows. Forms part of the ribosomal stalk which helps the ribosome interact with GTP-bound translation factors. This chain is Large ribosomal subunit protein uL11, found in Synechococcus sp. (strain CC9902).